Here is a 435-residue protein sequence, read N- to C-terminus: Adenylosuccinate synthetase (435 aa).

Residues 17 to 23 (GDEGKGK) and 47 to 49 (GHT) each bind GTP. The active-site Proton acceptor is Asp18. The Mg(2+) site is built by Asp18 and Gly47. IMP is bound by residues 18–21 (DEGK), 45–48 (NAGH), Thr138, Arg152, Asn232, Thr247, and Arg311. The active-site Proton donor is the His48. Residue 307 to 313 (VTTGRKR) coordinates substrate. GTP is bound by residues Arg313, 339 to 341 (KLD), and 421 to 423 (GVG).

The protein belongs to the adenylosuccinate synthetase family. In terms of assembly, homodimer. Requires Mg(2+) as cofactor.

It is found in the cytoplasm. The enzyme catalyses IMP + L-aspartate + GTP = N(6)-(1,2-dicarboxyethyl)-AMP + GDP + phosphate + 2 H(+). Its pathway is purine metabolism; AMP biosynthesis via de novo pathway; AMP from IMP: step 1/2. Its function is as follows. Plays an important role in the de novo pathway and in the salvage pathway of purine nucleotide biosynthesis. Catalyzes the first committed step in the biosynthesis of AMP from IMP. The chain is Adenylosuccinate synthetase from Caenorhabditis briggsae.